A 155-amino-acid polypeptide reads, in one-letter code: MFTIDFSDHTGLVKDAWYKQIEDLLEFAKKEEHIEDDAELSVTFVDKQEIQEINRTYRDKDKVTDVISFALEEDEPEIDFSGLDIPRVLGDIIICTDVAQEQANNYGHSFERELGFLALHGFLHLLGYDHMTEADEKEMFGRQDTILNAYGLTRD.

The Zn(2+) site is built by histidine 120, histidine 124, and histidine 130.

The protein belongs to the endoribonuclease YbeY family. Zn(2+) serves as cofactor.

It is found in the cytoplasm. Its function is as follows. Single strand-specific metallo-endoribonuclease involved in late-stage 70S ribosome quality control and in maturation of the 3' terminus of the 16S rRNA. The protein is Endoribonuclease YbeY of Staphylococcus aureus (strain Mu3 / ATCC 700698).